Here is a 100-residue protein sequence, read N- to C-terminus: Integration host factor subunit beta (100 aa).

The interval Leu53 to Ser100 is disordered. Basic and acidic residues predominate over residues Pro82–Asn91.

This sequence belongs to the bacterial histone-like protein family. As to quaternary structure, heterodimer of an alpha and a beta chain.

Its function is as follows. This protein is one of the two subunits of integration host factor, a specific DNA-binding protein that functions in genetic recombination as well as in transcriptional and translational control. The sequence is that of Integration host factor subunit beta from Alkalilimnicola ehrlichii (strain ATCC BAA-1101 / DSM 17681 / MLHE-1).